The following is a 212-amino-acid chain: 3-isopropylmalate dehydratase small subunit (212 aa).

This sequence belongs to the LeuD family. LeuD type 1 subfamily. As to quaternary structure, heterodimer of LeuC and LeuD.

It catalyses the reaction (2R,3S)-3-isopropylmalate = (2S)-2-isopropylmalate. Its pathway is amino-acid biosynthesis; L-leucine biosynthesis; L-leucine from 3-methyl-2-oxobutanoate: step 2/4. Functionally, catalyzes the isomerization between 2-isopropylmalate and 3-isopropylmalate, via the formation of 2-isopropylmaleate. The sequence is that of 3-isopropylmalate dehydratase small subunit from Dechloromonas aromatica (strain RCB).